Reading from the N-terminus, the 398-residue chain is NADH-ubiquinone oxidoreductase 49 kDa subunit (398 aa).

Belongs to the complex I 49 kDa subunit family.

It is found in the mitochondrion. The enzyme catalyses a ubiquinone + NADH + 5 H(+)(in) = a ubiquinol + NAD(+) + 4 H(+)(out). Its function is as follows. Core subunit of the mitochondrial membrane respiratory chain NADH dehydrogenase (Complex I) that is believed to belong to the minimal assembly required for catalysis. Complex I functions in the transfer of electrons from NADH to the respiratory chain. The immediate electron acceptor for the enzyme is believed to be ubiquinone. Component of the iron-sulfur (IP) fragment of the enzyme. Component of the iron-sulfur (IP) fragment of the enzyme. The chain is NADH-ubiquinone oxidoreductase 49 kDa subunit (NAD7) from Pylaiella littoralis (Seaweed).